A 512-amino-acid chain; its full sequence is D-alanine--D-alanyl carrier protein ligase (512 aa).

ATP is bound at residue 152-153 (TS). Aspartate 199 contributes to the D-alanine binding site. Position 294–299 (294–299 (NAYGPT)) interacts with ATP. Valine 303 lines the D-alanine pocket. Residues aspartate 385, 397-400 (YGGR), and lysine 499 each bind ATP. Lysine 499 contributes to the D-alanine binding site.

It belongs to the ATP-dependent AMP-binding enzyme family. DltA subfamily.

Its subcellular location is the cytoplasm. The enzyme catalyses holo-[D-alanyl-carrier protein] + D-alanine + ATP = D-alanyl-[D-alanyl-carrier protein] + AMP + diphosphate. It participates in cell wall biogenesis; lipoteichoic acid biosynthesis. Its function is as follows. Catalyzes the first step in the D-alanylation of lipoteichoic acid (LTA), the activation of D-alanine and its transfer onto the D-alanyl carrier protein (Dcp) DltC. In an ATP-dependent two-step reaction, forms a high energy D-alanyl-AMP intermediate, followed by transfer of the D-alanyl residue as a thiol ester to the phosphopantheinyl prosthetic group of the Dcp. D-alanylation of LTA plays an important role in modulating the properties of the cell wall in Gram-positive bacteria, influencing the net charge of the cell wall. In Streptococcus pyogenes serotype M1, this protein is D-alanine--D-alanyl carrier protein ligase.